We begin with the raw amino-acid sequence, 215 residues long: Superoxide dismutase [Mn] (215 aa).

The Mn(2+) site is built by H27, H83, D170, and H174.

This sequence belongs to the iron/manganese superoxide dismutase family. Homodimer. The cofactor is Mn(2+).

It catalyses the reaction 2 superoxide + 2 H(+) = H2O2 + O2. Its function is as follows. Destroys superoxide anion radicals which are normally produced within the cells and which are toxic to biological systems. The sequence is that of Superoxide dismutase [Mn] (sodA) from Haemophilus influenzae (strain ATCC 51907 / DSM 11121 / KW20 / Rd).